The following is a 299-amino-acid chain: Biotin transporter (299 aa).

A run of 10 helical transmembrane segments spans residues 2–22 (ALLIITTILWAFSFSFYGEYL), 26–46 (VDSYFAVLVRVGLAALVFLPF), 56–76 (TVGLYMLVGAMQLGVMYMLSF), 81–101 (YLTVSELLLFTVLTPLYITLI), 110–130 (LRWGYAFSALLAVIGAGIIRY), 137–157 (FWTGLLLVQLSNITFAIGMVG), 172–192 (AFAWFYLGAFLVAVIAWFLLG), 202–222 (LQWGILVFLGVVASGIGYFMW), 233–253 (TLGIMNNMHVPAGLLVNLAIW), and 256–276 (QPHWPTFITGALVILASLWVH). EamA domains follow at residues 3-128 (LLII…AGII) and 139-274 (TGLL…ASLW).

It belongs to the drug/metabolite transporter (DMT) superfamily. 10 TMS drug/metabolite exporter (DME) (TC 2.A.7.3) family.

It is found in the cell inner membrane. It catalyses the reaction biotin(in) = biotin(out). Its function is as follows. Uptake of biotin. The protein is Biotin transporter of Escherichia coli O157:H7.